Consider the following 727-residue polypeptide: Glycerol-3-phosphate dehydrogenase, mitochondrial (727 aa).

A mitochondrion-targeting transit peptide spans 1–42 (MAFQKAVKGTILVGGGALATVLGLSPFAHYRRKQVSLAYVEA). 71–99 (DILVIGGGATGCGCALDAVTRGLKTALVE) is a binding site for FAD. Tyrosine 601 carries the post-translational modification Phosphotyrosine. EF-hand domains are found at residues 623 to 658 (SDIDRYKKRFHKFDEDEKGFITIVDVQRVLESINVQ) and 659 to 694 (MDENTLHEILCEVDLNKNGQVELHEFLQLMSAVQKG). The Ca(2+) site is built by aspartate 672, asparagine 674, asparagine 676, glutamine 678, and glutamate 683.

The protein belongs to the FAD-dependent glycerol-3-phosphate dehydrogenase family. FAD serves as cofactor.

The protein resides in the mitochondrion inner membrane. The enzyme catalyses a quinone + sn-glycerol 3-phosphate = dihydroxyacetone phosphate + a quinol. Its pathway is polyol metabolism; glycerol degradation via glycerol kinase pathway; glycerone phosphate from sn-glycerol 3-phosphate (anaerobic route): step 1/1. Its activity is regulated as follows. Calcium-binding enhance the activity of the enzyme. Functionally, calcium-responsive mitochondrial glycerol-3-phosphate dehydrogenase which seems to be a key component of the pancreatic beta-cell glucose-sensing device. In Mus musculus (Mouse), this protein is Glycerol-3-phosphate dehydrogenase, mitochondrial.